The sequence spans 127 residues: Translation initiation factor 5A (127 aa).

K35 carries the hypusine modification.

Belongs to the eIF-5A family.

It localises to the cytoplasm. In terms of biological role, functions by promoting the formation of the first peptide bond. The polypeptide is Translation initiation factor 5A (eIF5A) (Methanothrix thermoacetophila (strain DSM 6194 / JCM 14653 / NBRC 101360 / PT) (Methanosaeta thermophila)).